A 476-amino-acid chain; its full sequence is Bifunctional protein HldE (476 aa).

Positions 1 to 318 (MKVTLPDFRR…ENAIRGRAET (318 aa)) are ribokinase. Residue 195 to 198 (NLSE) participates in ATP binding. The active site involves Asp-264. The interval 344–476 (MTNGIFDILH…IIQSIKNGRG (133 aa)) is cytidylyltransferase.

It in the N-terminal section; belongs to the carbohydrate kinase PfkB family. In the C-terminal section; belongs to the cytidylyltransferase family. Homodimer.

The enzyme catalyses D-glycero-beta-D-manno-heptose 7-phosphate + ATP = D-glycero-beta-D-manno-heptose 1,7-bisphosphate + ADP + H(+). The catalysed reaction is D-glycero-beta-D-manno-heptose 1-phosphate + ATP + H(+) = ADP-D-glycero-beta-D-manno-heptose + diphosphate. It functions in the pathway nucleotide-sugar biosynthesis; ADP-L-glycero-beta-D-manno-heptose biosynthesis; ADP-L-glycero-beta-D-manno-heptose from D-glycero-beta-D-manno-heptose 7-phosphate: step 1/4. It participates in nucleotide-sugar biosynthesis; ADP-L-glycero-beta-D-manno-heptose biosynthesis; ADP-L-glycero-beta-D-manno-heptose from D-glycero-beta-D-manno-heptose 7-phosphate: step 3/4. Functionally, catalyzes the phosphorylation of D-glycero-D-manno-heptose 7-phosphate at the C-1 position to selectively form D-glycero-beta-D-manno-heptose-1,7-bisphosphate. Catalyzes the ADP transfer from ATP to D-glycero-beta-D-manno-heptose 1-phosphate, yielding ADP-D-glycero-beta-D-manno-heptose. This is Bifunctional protein HldE from Yersinia pestis bv. Antiqua (strain Antiqua).